Consider the following 631-residue polypeptide: ATP-dependent RNA helicase mrh4, mitochondrial (631 aa).

A mitochondrion-targeting transit peptide spans 1–45; that stretch reads MNRLGRLPLPLPPSVCLFCRFRATASLPSSLQATRSMATARLRRR. Residues 68–112 are disordered; it reads KERFGPFAGMNQTEARIRETPRARSRAAQKRSGEPEEDSQKESPL. Residues 98–108 are compositionally biased toward basic and acidic residues; the sequence is RSGEPEEDSQK. The short motif at 141 to 174 is the Q motif element; sequence TSFDQFQLLPVVRNSISSQALPGLVDVTPTPIQR. Over residues 180–193 the composition is skewed to basic and acidic residues; the sequence is LLEEPKTEKKPTKA. Residues 180 to 199 form a disordered region; that stretch reads LLEEPKTEKKPTKADDDEPR. The 213-residue stretch at 194-406 folds into the Helicase ATP-binding domain; that stretch reads DDDEPRYDQY…RKRYPDIKRL (213 aa). 207–214 serves as a coordination point for ATP; the sequence is AETGSGKT. The interval 229-249 is disordered; the sequence is EARDKELEKKEQEEKAREREE. The short motif at 353 to 356 is the DEAD box element; the sequence is DEAD. The 177-residue stretch at 455 to 631 folds into the Helicase C-terminal domain; it reads GPYASYVAPK…EGMFRGQALI (177 aa).

It belongs to the DEAD box helicase family. MRH4 subfamily.

It is found in the mitochondrion. It catalyses the reaction ATP + H2O = ADP + phosphate + H(+). Its function is as follows. ATP-binding RNA helicase involved in mitochondrial RNA metabolism. Required for maintenance of mitochondrial DNA. The chain is ATP-dependent RNA helicase mrh4, mitochondrial (mrh4) from Aspergillus fumigatus (strain ATCC MYA-4609 / CBS 101355 / FGSC A1100 / Af293) (Neosartorya fumigata).